A 506-amino-acid chain; its full sequence is Histidine--tRNA ligase, mitochondrial (506 aa).

The N-terminal 33 residues, 1–33, are a transit peptide targeting the mitochondrion; that stretch reads MPLLGLLPRRAWASLLSQLLRPPCASCTGAVRC. At S67 the chain carries Phosphoserine. L-histidine-binding positions include 131–133, R158, Q174, D178, R327, and 331–332; these read DLT and YY. K444 is modified (N6-acetyllysine).

This sequence belongs to the class-II aminoacyl-tRNA synthetase family. As to quaternary structure, homodimer. As to expression, a high level expression is seen in the heart, kidney and skeletal muscle while a lower level expression is seen in the brain and liver.

It localises to the mitochondrion. The enzyme catalyses tRNA(His) + L-histidine + ATP = L-histidyl-tRNA(His) + AMP + diphosphate + H(+). Functionally, mitochondrial aminoacyl-tRNA synthetase that catalyzes the ATP-dependent ligation of histidine to the 3'-end of its cognate tRNA, via the formation of an aminoacyl-adenylate intermediate (His-AMP). This is Histidine--tRNA ligase, mitochondrial (HARS2) from Homo sapiens (Human).